The following is a 501-amino-acid chain: ATP synthase subunit alpha (501 aa).

169-176 (GDRQTGKT) serves as a coordination point for ATP.

Belongs to the ATPase alpha/beta chains family. As to quaternary structure, F-type ATPases have 2 components, CF(1) - the catalytic core - and CF(0) - the membrane proton channel. CF(1) has five subunits: alpha(3), beta(3), gamma(1), delta(1), epsilon(1). CF(0) has three main subunits: a(1), b(2) and c(9-12). The alpha and beta chains form an alternating ring which encloses part of the gamma chain. CF(1) is attached to CF(0) by a central stalk formed by the gamma and epsilon chains, while a peripheral stalk is formed by the delta and b chains.

The protein resides in the cell inner membrane. It carries out the reaction ATP + H2O + 4 H(+)(in) = ADP + phosphate + 5 H(+)(out). Functionally, produces ATP from ADP in the presence of a proton gradient across the membrane. The alpha chain is a regulatory subunit. The sequence is that of ATP synthase subunit alpha from Campylobacter lari (strain RM2100 / D67 / ATCC BAA-1060).